The sequence spans 688 residues: ATP-dependent zinc metalloprotease FTSH 6, chloroplastic (688 aa).

A chloroplast-targeting transit peptide spans 1-75 (MKMASSSSAL…GFTSALGTVL (75 aa)). Polar residues predominate over residues 25–36 (QQFQKPASLSKS). Positions 25-44 (QQFQKPASLSKSSHTHKPSL) are disordered. The N-terminal 8 residues, 76–83 (AHPAKAEP), are a transit peptide targeting the thylakoid. Topologically, residues 84–168 (EAPIEATSNR…AHPMNVNWGA (85 aa)) are lumenal, thylakoid. A helical transmembrane segment spans residues 169 to 189 (FLLNFLGNLGFPLILLVSLLL). At 190-688 (TSSSRRNPAG…RIRINDLISV (499 aa)) the chain is on the stromal side. Residue 264–271 (GPPGTGKT) coordinates ATP. Position 485 (histidine 485) interacts with Zn(2+). Glutamate 486 is an active-site residue. Zn(2+)-binding residues include histidine 489 and aspartate 563.

This sequence in the N-terminal section; belongs to the AAA ATPase family. The protein in the C-terminal section; belongs to the peptidase M41 family. Requires Zn(2+) as cofactor.

Its subcellular location is the plastid. The protein localises to the chloroplast thylakoid membrane. Functionally, probable ATP-dependent zinc metallopeptidase. Involved in the degradation of the light-harvesting complex of photosystem II (LHC II) during senescence or high light acclimation. In Arabidopsis thaliana (Mouse-ear cress), this protein is ATP-dependent zinc metalloprotease FTSH 6, chloroplastic (FTSH6).